Reading from the N-terminus, the 103-residue chain is Cytotoxin-like protein TA-BMBGT3 (103 aa).

The signal sequence occupies residues 1-21 (MKTLLLTLVVVTIICLDLGYT). 5 disulfide bridges follow: C24/C45, C27/C37, C38/C72, C76/C90, and C91/C96.

Belongs to the three-finger toxin family. Ancestral subfamily. Orphan group XVII sub-subfamily. In terms of tissue distribution, expressed by the venom gland.

The protein localises to the secreted. The chain is Cytotoxin-like protein TA-BMBGT3 from Bungarus multicinctus (Many-banded krait).